The primary structure comprises 410 residues: L-sorbose 1-phosphate reductase (410 aa).

Cys40, His69, and Glu70 together coordinate Zn(2+). NAD(+) contacts are provided by residues Arg221 and Gly309 to Thr310.

The protein belongs to the zinc-containing alcohol dehydrogenase family. Zn(2+) is required as a cofactor.

Its function is as follows. Reduces L-sorbose 1-phosphate to D-glucitol 6-phosphate. The sequence is that of L-sorbose 1-phosphate reductase (sorE) from Klebsiella pneumoniae.